A 657-amino-acid polypeptide reads, in one-letter code: 1-deoxy-D-xylulose-5-phosphate synthase (657 aa).

Position 73 (His73) interacts with thiamine diphosphate. A disordered region spans residues 91-110 (RQEGGMSGYPDRGESEHDIV). The segment covering 101 to 110 (DRGESEHDIV) has biased composition (basic and acidic residues). 113–115 (SHA) contacts thiamine diphosphate. Asp145 contributes to the Mg(2+) binding site. Residues 146–147 (GA), Asn175, Tyr293, and Glu375 each bind thiamine diphosphate. A Mg(2+)-binding site is contributed by Asn175.

This sequence belongs to the transketolase family. DXPS subfamily. In terms of assembly, homodimer. Mg(2+) serves as cofactor. It depends on thiamine diphosphate as a cofactor.

The enzyme catalyses D-glyceraldehyde 3-phosphate + pyruvate + H(+) = 1-deoxy-D-xylulose 5-phosphate + CO2. Its pathway is metabolic intermediate biosynthesis; 1-deoxy-D-xylulose 5-phosphate biosynthesis; 1-deoxy-D-xylulose 5-phosphate from D-glyceraldehyde 3-phosphate and pyruvate: step 1/1. Functionally, catalyzes the acyloin condensation reaction between C atoms 2 and 3 of pyruvate and glyceraldehyde 3-phosphate to yield 1-deoxy-D-xylulose-5-phosphate (DXP). This chain is 1-deoxy-D-xylulose-5-phosphate synthase, found in Arthrobacter sp. (strain FB24).